Reading from the N-terminus, the 159-residue chain is uncharacterized protein (159 aa).

Disordered regions lie at residues 1 to 29 (MHQT…TSES) and 114 to 159 (TRGG…NENT). A compositionally biased stretch (polar residues) spans 15 to 29 (SFSNESPTSRETSES).

This is an uncharacterized protein from Homo sapiens (Human).